Reading from the N-terminus, the 190-residue chain is Glutamyl-tRNA(Gln) amidotransferase subunit F, mitochondrial (190 aa).

It belongs to the GatF family. As to quaternary structure, subunit of the heterotrimeric GatFAB amidotransferase (AdT) complex, composed of A, B and F subunits.

It is found in the mitochondrion inner membrane. The catalysed reaction is L-glutamyl-tRNA(Gln) + L-glutamine + ATP + H2O = L-glutaminyl-tRNA(Gln) + L-glutamate + ADP + phosphate + H(+). Its function is as follows. Allows the formation of correctly charged Gln-tRNA(Gln) through the transamidation of misacylated Glu-tRNA(Gln) in the mitochondria. The reaction takes place in the presence of glutamine and ATP through an activated gamma-phospho-Glu-tRNA(Gln). Required for proper protein synthesis within the mitochondrion. This Eremothecium gossypii (strain ATCC 10895 / CBS 109.51 / FGSC 9923 / NRRL Y-1056) (Yeast) protein is Glutamyl-tRNA(Gln) amidotransferase subunit F, mitochondrial.